We begin with the raw amino-acid sequence, 73 residues long: Large ribosomal subunit protein bL31 (73 aa).

The span at 34–43 (KMNLDIDPKS) shows a compositional bias: basic and acidic residues. Positions 34-54 (KMNLDIDPKSHPAWTGGTQQM) are disordered.

It belongs to the bacterial ribosomal protein bL31 family. Type A subfamily. As to quaternary structure, part of the 50S ribosomal subunit.

Its function is as follows. Binds the 23S rRNA. This is Large ribosomal subunit protein bL31 from Rhodopseudomonas palustris (strain BisA53).